Consider the following 61-residue polypeptide: Probable tautomerase lmo2564 (61 aa).

Catalysis depends on Pro-2, which acts as the Proton acceptor; via imino nitrogen.

The protein belongs to the 4-oxalocrotonate tautomerase family.

The protein is Probable tautomerase lmo2564 of Listeria monocytogenes serovar 1/2a (strain ATCC BAA-679 / EGD-e).